Here is a 480-residue protein sequence, read N- to C-terminus: Adenosylhomocysteinase (480 aa).

Substrate is bound by residues Thr-63, Asp-142, and Glu-203. Thr-204 to Thr-206 is a binding site for NAD(+). Substrate is bound by residues Lys-233 and Asp-237. Residues Asn-238, Gly-267–Gly-272, Glu-290, Asn-325, Ile-346–His-348, and Asn-394 contribute to the NAD(+) site.

Belongs to the adenosylhomocysteinase family. It depends on NAD(+) as a cofactor.

It is found in the cytoplasm. It catalyses the reaction S-adenosyl-L-homocysteine + H2O = L-homocysteine + adenosine. It functions in the pathway amino-acid biosynthesis; L-homocysteine biosynthesis; L-homocysteine from S-adenosyl-L-homocysteine: step 1/1. In terms of biological role, may play a key role in the regulation of the intracellular concentration of adenosylhomocysteine. This Xanthomonas euvesicatoria pv. vesicatoria (strain 85-10) (Xanthomonas campestris pv. vesicatoria) protein is Adenosylhomocysteinase.